We begin with the raw amino-acid sequence, 226 residues long: Lipoprotein-releasing system ATP-binding protein LolD 1 (226 aa).

Positions 5 to 225 (LKLDGIRKSY…IVRVVDGKIA (221 aa)) constitute an ABC transporter domain. An ATP-binding site is contributed by 42–49 (GPSGSGKS).

This sequence belongs to the ABC transporter superfamily. Lipoprotein translocase (TC 3.A.1.125) family. In terms of assembly, the complex is composed of two ATP-binding proteins (LolD) and two transmembrane proteins (LolC and LolE).

The protein localises to the cell inner membrane. Functionally, part of the ABC transporter complex LolCDE involved in the translocation of mature outer membrane-directed lipoproteins, from the inner membrane to the periplasmic chaperone, LolA. Responsible for the formation of the LolA-lipoprotein complex in an ATP-dependent manner. In Rhodopseudomonas palustris (strain ATCC BAA-98 / CGA009), this protein is Lipoprotein-releasing system ATP-binding protein LolD 1.